The primary structure comprises 147 residues: UPF0047 protein sll1880 (147 aa).

The protein belongs to the UPF0047 family.

This is UPF0047 protein sll1880 from Synechocystis sp. (strain ATCC 27184 / PCC 6803 / Kazusa).